Reading from the N-terminus, the 290-residue chain is GTPase Era (290 aa).

An Era-type G domain is found at 2–169; sequence KSGFAAILGR…KNKIYENFSE (168 aa). The interval 10-17 is G1; the sequence is GRPSTGKS. 10–17 is a binding site for GTP; that stretch reads GRPSTGKS. The tract at residues 36 to 40 is G2; it reads QTTRN. A G3 region spans residues 57–60; it reads DTPG. GTP-binding positions include 57 to 61 and 119 to 122; these read DTPGF and NKVD. A G4 region spans residues 119 to 122; it reads NKVD. The interval 148-150 is G5; sequence ISA. Residues 200 to 276 form the KH type-2 domain; the sequence is LKEELPYSLY…NLFLQVKLKK (77 aa).

The protein belongs to the TRAFAC class TrmE-Era-EngA-EngB-Septin-like GTPase superfamily. Era GTPase family. Monomer.

Its subcellular location is the cytoplasm. It is found in the cell inner membrane. Its function is as follows. An essential GTPase that binds both GDP and GTP, with rapid nucleotide exchange. Plays a role in 16S rRNA processing and 30S ribosomal subunit biogenesis and possibly also in cell cycle regulation and energy metabolism. This is GTPase Era from Borrelia garinii subsp. bavariensis (strain ATCC BAA-2496 / DSM 23469 / PBi) (Borreliella bavariensis).